A 199-amino-acid polypeptide reads, in one-letter code: MAPGSDMHSLDALVQALRRLPGVGVKSAQRMAFHLLQHDRQGAEVLSRALHDAAQSVRHCARCHTFTEGEVCSTCLDPSRDASRLAVVETPADQAALERTGAFRGLYFVLMGKLSPLDGIGPKDIGFGKLLERAGDGVVQEVILATNFTAEGEATAHALSETLKARGMHVTRLARGVPVGSELEYVDLGTIAHALVDRR.

Residues 60–75 (CARCHTFTEGEVCSTC) form a C4-type zinc finger. The Toprim domain occupies 83-178 (SRLAVVETPA…HVTRLARGVP (96 aa)).

The protein belongs to the RecR family.

Its function is as follows. May play a role in DNA repair. It seems to be involved in an RecBC-independent recombinational process of DNA repair. It may act with RecF and RecO. This is Recombination protein RecR from Paracidovorax citrulli (strain AAC00-1) (Acidovorax citrulli).